A 156-amino-acid chain; its full sequence is Cyanate hydratase (156 aa).

Residues R96, E99, and S122 contribute to the active site.

It belongs to the cyanase family.

The enzyme catalyses cyanate + hydrogencarbonate + 3 H(+) = NH4(+) + 2 CO2. In terms of biological role, catalyzes the reaction of cyanate with bicarbonate to produce ammonia and carbon dioxide. This is Cyanate hydratase from Serratia proteamaculans (strain 568).